The primary structure comprises 190 residues: Elongation factor P-like protein (190 aa).

The protein belongs to the elongation factor P family.

The sequence is that of Elongation factor P-like protein from Yersinia enterocolitica serotype O:8 / biotype 1B (strain NCTC 13174 / 8081).